Here is a 126-residue protein sequence, read N- to C-terminus: Aspartate 1-decarboxylase (126 aa).

The active-site Schiff-base intermediate with substrate; via pyruvic acid is Ser25. Position 25 is a pyruvic acid (Ser) (Ser25). Position 57 (Thr57) interacts with substrate. The active-site Proton donor is Tyr58. Residue 73 to 75 (GAA) coordinates substrate.

This sequence belongs to the PanD family. As to quaternary structure, heterooctamer of four alpha and four beta subunits. Pyruvate serves as cofactor. In terms of processing, is synthesized initially as an inactive proenzyme, which is activated by self-cleavage at a specific serine bond to produce a beta-subunit with a hydroxyl group at its C-terminus and an alpha-subunit with a pyruvoyl group at its N-terminus.

Its subcellular location is the cytoplasm. The catalysed reaction is L-aspartate + H(+) = beta-alanine + CO2. It functions in the pathway cofactor biosynthesis; (R)-pantothenate biosynthesis; beta-alanine from L-aspartate: step 1/1. In terms of biological role, catalyzes the pyruvoyl-dependent decarboxylation of aspartate to produce beta-alanine. The polypeptide is Aspartate 1-decarboxylase (Serratia proteamaculans (strain 568)).